Reading from the N-terminus, the 116-residue chain is Probable transcriptional regulator WhiB6 (116 aa).

Residues cysteine 12, cysteine 53, cysteine 56, and cysteine 62 each contribute to the [4Fe-4S] cluster site. Residues 33–86 (VCTQDPDRWTTTPDDEAKTLCRACPRRWLCARDAVESAGAEGLWAGVVIPESGR) form the 4Fe-4S Wbl-type domain.

Belongs to the WhiB family. Requires [4Fe-4S] cluster as cofactor. Post-translationally, the Fe-S cluster can be nitrosylated by nitric oxide (NO). Upon Fe-S cluster removal intramolecular disulfide bonds are formed.

The protein resides in the cytoplasm. Acts as a transcriptional regulator. Probably redox-responsive. The apo- but not holo-form probably binds DNA. The protein is Probable transcriptional regulator WhiB6 (whiB6) of Mycobacterium tuberculosis (strain CDC 1551 / Oshkosh).